We begin with the raw amino-acid sequence, 394 residues long: DNA primase large subunit PriL (394 aa).

[4Fe-4S] cluster-binding residues include cysteine 231, cysteine 340, cysteine 351, and cysteine 357.

It belongs to the eukaryotic-type primase large subunit family. As to quaternary structure, heterodimer of a small subunit (PriS) and a large subunit (PriL). [4Fe-4S] cluster serves as cofactor.

Functionally, regulatory subunit of DNA primase, an RNA polymerase that catalyzes the synthesis of short RNA molecules used as primers for DNA polymerase during DNA replication. Stabilizes and modulates the activity of the small subunit, increasing the rate of DNA synthesis, and conferring RNA synthesis capability. The DNA polymerase activity may enable DNA primase to also catalyze primer extension after primer synthesis. May also play a role in DNA repair. This chain is DNA primase large subunit PriL, found in Pyrococcus horikoshii (strain ATCC 700860 / DSM 12428 / JCM 9974 / NBRC 100139 / OT-3).